A 227-amino-acid chain; its full sequence is Zinc finger protein ZAT10 (227 aa).

The C2H2-type 1 zinc finger occupies 80–102 (YKCSVCDKTFSSYQALGGHKASH). Residues 96–128 (GGHKASHRKNLSQTLSGGGDDHSTSSATTTSAV) are disordered. Residues 119 to 128 (TSSATTTSAV) are compositionally biased toward low complexity. The C2H2-type 2 zinc finger occupies 136-158 (HVCTICNKSFPSGQALGGHKRCH). The segment at 168–189 (SSVSNSEGAGSTSHVSSSHRGF) is disordered. Over residues 174–186 (EGAGSTSHVSSSH) the composition is skewed to polar residues.

In terms of tissue distribution, expressed in roots, stems and leaves.

The protein resides in the nucleus. In terms of biological role, transcriptional repressor involved in abiotic stress responses. Can repress the stress responsive genes DREB1A and LTI78. Probably involved in jasmonate (JA) early signaling response. May regulate the expression of the JA biosynthesis gene LOX3 and control the expression of TIFY10A/JAZ1, a key repressor in the JA signaling cascade. This chain is Zinc finger protein ZAT10 (ZAT10), found in Arabidopsis thaliana (Mouse-ear cress).